Consider the following 444-residue polypeptide: Chromosome partition protein MukF (444 aa).

The segment at 212-240 (LDETSGNLRELQDTLNAAGDKLQAQLLRI) is leucine-zipper.

It belongs to the MukF family. Interacts, and probably forms a ternary complex, with MukE and MukB via its C-terminal region. The complex formation is stimulated by calcium or magnesium. It is required for an interaction between MukE and MukB.

Its subcellular location is the cytoplasm. It is found in the nucleoid. Involved in chromosome condensation, segregation and cell cycle progression. May participate in facilitating chromosome segregation by condensation DNA from both sides of a centrally located replisome during cell division. Not required for mini-F plasmid partitioning. Probably acts via its interaction with MukB and MukE. Overexpression results in anucleate cells. It has a calcium binding activity. In Haemophilus influenzae (strain PittEE), this protein is Chromosome partition protein MukF.